Here is a 346-residue protein sequence, read N- to C-terminus: Annexin A1 (346 aa).

The residue at position 2 (Ala2) is an N-acetylalanine. A Phosphoserine; by TRPM7 modification is found at Ser5. Gln19 participates in a covalent cross-link: Isoglutamyl lysine isopeptide (Gln-Lys) (interchain with K-?). Tyr21 carries the phosphotyrosine; by EGFR modification. A Phosphoserine; by PKC modification is found at Ser27. Ser34 and Ser37 each carry phosphoserine. Thr41 bears the Phosphothreonine mark. Annexin repeat units follow at residues 42–113 (FNPS…ALLK), 114–185 (TPAQ…SLAK), 197–269 (DLAD…AIVK), and 273–344 (SKPA…ALCG). Lys58 bears the N6-acetyllysine mark. Gly59, Val60, Glu62, Lys97, Leu100, Glu105, Met127, Gly129, Gly131, Thr132, and Glu134 together coordinate Ca(2+). Thr136 is modified (phosphothreonine). Ca(2+) is bound by residues Asp171, Gly210, and Arg213. Residue Lys214 forms a Glycyl lysine isopeptide (Lys-Gly) (interchain with G-Cter in SUMO1); alternate linkage. Residue Lys214 forms a Glycyl lysine isopeptide (Lys-Gly) (interchain with G-Cter in SUMO2); alternate linkage. Ca(2+) is bound at residue Gly215. Lys239 carries the N6-acetyllysine modification. The Ca(2+) site is built by Asp253, Glu255, and Leu256. Lys257 participates in a covalent cross-link: Glycyl lysine isopeptide (Lys-Gly) (interchain with G-Cter in SUMO1). Residues Glu261, Met286, Gly288, and Gly290 each coordinate Ca(2+). The residue at position 312 (Lys312) is an N6-acetyllysine. Cys324 and Cys343 are oxidised to a cystine. Ca(2+)-binding residues include Leu328, Glu330, and Thr331. Lys332 is covalently cross-linked (Glycyl lysine isopeptide (Lys-Gly) (interchain with G-Cter in SUMO1)). Position 336 (Glu336) interacts with Ca(2+).

This sequence belongs to the annexin family. Homodimer; non-covalently linked. Homodimer; linked by transglutamylation. Homodimers linked by transglutamylation are observed in placenta, but not in other tissues. Interacts with S100A11. Heterotetramer, formed by two molecules each of S100A11 and ANXA1. Interacts with DYSF. Interacts with EGFR. Post-translationally, phosphorylated by protein kinase C, EGFR and TRPM7. Phosphorylated in response to EGF treatment. Sumoylated. In terms of processing, proteolytically cleaved by cathepsin CTSG to release the active N-terminal peptide Ac2-26.

The protein localises to the nucleus. Its subcellular location is the cytoplasm. It is found in the cell projection. The protein resides in the cilium. It localises to the basolateral cell membrane. The protein localises to the lateral cell membrane. Its subcellular location is the cell membrane. It is found in the apical cell membrane. The protein resides in the membrane. It localises to the early endosome. The protein localises to the cytoplasmic vesicle membrane. Its subcellular location is the endosome membrane. It is found in the secreted. The protein resides in the extracellular space. It localises to the extracellular exosome. The protein localises to the cytoplasmic vesicle. Its subcellular location is the secretory vesicle lumen. It is found in the phagocytic cup. In terms of biological role, plays important roles in the innate immune response as effector of glucocorticoid-mediated responses and regulator of the inflammatory process. Has anti-inflammatory activity. Plays a role in glucocorticoid-mediated down-regulation of the early phase of the inflammatory response. Contributes to the adaptive immune response by enhancing signaling cascades that are triggered by T-cell activation, regulates differentiation and proliferation of activated T-cells. Promotes the differentiation of T-cells into Th1 cells and negatively regulates differentiation into Th2 cells. Has no effect on unstimulated T-cells. Negatively regulates hormone exocytosis via activation of the formyl peptide receptors and reorganization of the actin cytoskeleton. Has high affinity for Ca(2+) and can bind up to eight Ca(2+) ions. Displays Ca(2+)-dependent binding to phospholipid membranes. Plays a role in the formation of phagocytic cups and phagosomes. Plays a role in phagocytosis by mediating the Ca(2+)-dependent interaction between phagosomes and the actin cytoskeleton. Its function is as follows. Functions at least in part by activating the formyl peptide receptors and downstream signaling cascades. Promotes chemotaxis of granulocytes and monocytes via activation of the formyl peptide receptors. Promotes rearrangement of the actin cytoskeleton, cell polarization and cell migration. Promotes resolution of inflammation and wound healing. Acts via neutrophil N-formyl peptide receptors to enhance the release of CXCL2. The chain is Annexin A1 (ANXA1) from Pan troglodytes (Chimpanzee).